The chain runs to 153 residues: 6,7-dimethyl-8-ribityllumazine synthase (153 aa).

Residues phenylalanine 21, 55–57, and 79–81 each bind 5-amino-6-(D-ribitylamino)uracil; these read AFE and TVI. (2S)-2-hydroxy-3-oxobutyl phosphate is bound at residue 84–85; it reads AT. The Proton donor role is filled by histidine 87. Residue phenylalanine 112 participates in 5-amino-6-(D-ribitylamino)uracil binding. A (2S)-2-hydroxy-3-oxobutyl phosphate-binding site is contributed by arginine 126.

Belongs to the DMRL synthase family. As to quaternary structure, forms an icosahedral capsid composed of 60 subunits, arranged as a dodecamer of pentamers.

It carries out the reaction (2S)-2-hydroxy-3-oxobutyl phosphate + 5-amino-6-(D-ribitylamino)uracil = 6,7-dimethyl-8-(1-D-ribityl)lumazine + phosphate + 2 H2O + H(+). It participates in cofactor biosynthesis; riboflavin biosynthesis; riboflavin from 2-hydroxy-3-oxobutyl phosphate and 5-amino-6-(D-ribitylamino)uracil: step 1/2. Its function is as follows. Catalyzes the formation of 6,7-dimethyl-8-ribityllumazine by condensation of 5-amino-6-(D-ribitylamino)uracil with 3,4-dihydroxy-2-butanone 4-phosphate. This is the penultimate step in the biosynthesis of riboflavin. This Bacillus cereus (strain 03BB102) protein is 6,7-dimethyl-8-ribityllumazine synthase.